The primary structure comprises 87 residues: MSEELPQRRETHPEELVRNVRERERDTWQWTSIRVPEEILQRWLAMLRSGRNRKKVYREMQKWMWIHPKGPVIRACGCRLCNPGWGT.

The Nuclear export signal signature appears at 40–47 (LQRWLAML). The Nuclear localization signal motif lies at 48 to 55 (RSGRNRKK).

It localises to the virion. It is found in the host nucleus. In terms of biological role, seems to function as a Vpr-like protein, since it mediates host cell cycle arrest in G2 phase. Cell cycle arrest creates a favorable environment for maximizing viral expression and production. The sequence is that of Probable Vpr-like protein (tat) from Capra hircus (Goat).